A 165-amino-acid chain; its full sequence is UPF0179 protein Igni_1272 (165 aa).

This sequence belongs to the UPF0179 family.

The polypeptide is UPF0179 protein Igni_1272 (Ignicoccus hospitalis (strain KIN4/I / DSM 18386 / JCM 14125)).